We begin with the raw amino-acid sequence, 145 residues long: Large ribosomal subunit protein uL15 (145 aa).

Residues Met1–Glu50 are disordered. The span at Arg20–Ser30 shows a compositional bias: gly residues.

Belongs to the universal ribosomal protein uL15 family. In terms of assembly, part of the 50S ribosomal subunit.

In terms of biological role, binds to the 23S rRNA. This is Large ribosomal subunit protein uL15 from Phytoplasma australiense.